Reading from the N-terminus, the 56-residue chain is Cecropin-A2 (56 aa).

Arginine 55 carries the arginine amide modification.

This sequence belongs to the cecropin family.

Its subcellular location is the secreted. Functionally, cecropins have lytic and antibacterial activity against several Gram-positive and Gram-negative bacteria. The protein is Cecropin-A2 (CecA2) of Drosophila yakuba (Fruit fly).